The primary structure comprises 178 residues: ATP synthase subunit delta (178 aa).

This sequence belongs to the ATPase delta chain family. In terms of assembly, F-type ATPases have 2 components, F(1) - the catalytic core - and F(0) - the membrane proton channel. F(1) has five subunits: alpha(3), beta(3), gamma(1), delta(1), epsilon(1). F(0) has three main subunits: a(1), b(2) and c(10-14). The alpha and beta chains form an alternating ring which encloses part of the gamma chain. F(1) is attached to F(0) by a central stalk formed by the gamma and epsilon chains, while a peripheral stalk is formed by the delta and b chains.

The protein resides in the cell inner membrane. Functionally, f(1)F(0) ATP synthase produces ATP from ADP in the presence of a proton or sodium gradient. F-type ATPases consist of two structural domains, F(1) containing the extramembraneous catalytic core and F(0) containing the membrane proton channel, linked together by a central stalk and a peripheral stalk. During catalysis, ATP synthesis in the catalytic domain of F(1) is coupled via a rotary mechanism of the central stalk subunits to proton translocation. Its function is as follows. This protein is part of the stalk that links CF(0) to CF(1). It either transmits conformational changes from CF(0) to CF(1) or is implicated in proton conduction. The polypeptide is ATP synthase subunit delta (Cellvibrio japonicus (strain Ueda107) (Pseudomonas fluorescens subsp. cellulosa)).